A 376-amino-acid polypeptide reads, in one-letter code: N-acetyldiaminopimelate deacetylase (376 aa).

Asp-69 is a catalytic residue. Glu-127 serves as the catalytic Proton acceptor.

It belongs to the peptidase M20A family. N-acetyldiaminopimelate deacetylase subfamily.

The enzyme catalyses N-acetyl-(2S,6S)-2,6-diaminopimelate + H2O = (2S,6S)-2,6-diaminopimelate + acetate. It functions in the pathway amino-acid biosynthesis; L-lysine biosynthesis via DAP pathway; LL-2,6-diaminopimelate from (S)-tetrahydrodipicolinate (acetylase route): step 3/3. Catalyzes the conversion of N-acetyl-diaminopimelate to diaminopimelate and acetate. The protein is N-acetyldiaminopimelate deacetylase of Lactococcus lactis subsp. cremoris (strain SK11).